Here is a 202-residue protein sequence, read N- to C-terminus: Recombination protein RecR (202 aa).

The C4-type zinc finger occupies cysteine 59–cysteine 74. Residues histidine 82–proline 176 form the Toprim domain.

It belongs to the RecR family.

Functionally, may play a role in DNA repair. It seems to be involved in an RecBC-independent recombinational process of DNA repair. It may act with RecF and RecO. In Thermosynechococcus vestitus (strain NIES-2133 / IAM M-273 / BP-1), this protein is Recombination protein RecR.